Consider the following 108-residue polypeptide: Phosphoribosyl-AMP cyclohydrolase (108 aa).

Position 78 (Asp78) interacts with Mg(2+). Residue Cys79 participates in Zn(2+) binding. Mg(2+) is bound by residues Asp80 and Asp82. The Zn(2+) site is built by Cys95 and Cys102.

It belongs to the PRA-CH family. Homodimer. Mg(2+) is required as a cofactor. Requires Zn(2+) as cofactor.

The protein resides in the cytoplasm. The catalysed reaction is 1-(5-phospho-beta-D-ribosyl)-5'-AMP + H2O = 1-(5-phospho-beta-D-ribosyl)-5-[(5-phospho-beta-D-ribosylamino)methylideneamino]imidazole-4-carboxamide. It functions in the pathway amino-acid biosynthesis; L-histidine biosynthesis; L-histidine from 5-phospho-alpha-D-ribose 1-diphosphate: step 3/9. Catalyzes the hydrolysis of the adenine ring of phosphoribosyl-AMP. The chain is Phosphoribosyl-AMP cyclohydrolase from Cenarchaeum symbiosum (strain A).